Reading from the N-terminus, the 297-residue chain is Large ribosomal subunit protein uL18 (297 aa).

A Glycyl lysine isopeptide (Lys-Gly) (interchain with G-Cter in ubiquitin) cross-link involves residue K164. S167, S176, and S235 each carry phosphoserine.

This sequence belongs to the universal ribosomal protein uL18 family. Component of the large ribosomal subunit (LSU). Mature yeast ribosomes consist of a small (40S) and a large (60S) subunit. The 40S small subunit contains 1 molecule of ribosomal RNA (18S rRNA) and 33 different proteins (encoded by 57 genes). The large 60S subunit contains 3 rRNA molecules (25S, 5.8S and 5S rRNA) and 46 different proteins (encoded by 81 genes). Component of a hexameric 5S RNP precursor complex, composed of 5S RNA, RRS1, RPF2, RPL5, RPL11A/RPL11B and SYO1; this complex acts as a precursor for ribosome assembly. RPL5/uL18 forms a heterotrimeric complex with SYO1 and RPL11A/RPL11B/uL5. Interaction of this complex with KAP104 allows the nuclear import of the heterotrimer.

It is found in the cytoplasm. The protein localises to the nucleus. Component of the ribosome, a large ribonucleoprotein complex responsible for the synthesis of proteins in the cell. The small ribosomal subunit (SSU) binds messenger RNAs (mRNAs) and translates the encoded message by selecting cognate aminoacyl-transfer RNA (tRNA) molecules. The large subunit (LSU) contains the ribosomal catalytic site termed the peptidyl transferase center (PTC), which catalyzes the formation of peptide bonds, thereby polymerizing the amino acids delivered by tRNAs into a polypeptide chain. The nascent polypeptides leave the ribosome through a tunnel in the LSU and interact with protein factors that function in enzymatic processing, targeting, and the membrane insertion of nascent chains at the exit of the ribosomal tunnel. The polypeptide is Large ribosomal subunit protein uL18 (Saccharomyces cerevisiae (strain ATCC 204508 / S288c) (Baker's yeast)).